Consider the following 43-residue polypeptide: Protein PsbN (43 aa).

A helical membrane pass occupies residues 5-25 (LILSIFIFSLLLGITSYSIYI).

Belongs to the PsbN family.

Its subcellular location is the plastid. The protein localises to the chloroplast thylakoid membrane. Its function is as follows. May play a role in photosystem I and II biogenesis. The protein is Protein PsbN of Cyanidium caldarium (Red alga).